The sequence spans 277 residues: Large ribosomal subunit protein uL2 (277 aa).

Disordered stretches follow at residues 1-58 (MGIR…GGGH) and 223-277 (GVVM…GKKR). A compositionally biased stretch (basic and acidic residues) spans 23 to 33 (EITRSEPEKSL). Residues 37–58 (LHGRGGRNAHGKITTRHKGGGH) are compositionally biased toward basic residues. Residues 251–267 (GKPEGRTRRNKPSDKLI) show a composition bias toward basic and acidic residues. Basic residues predominate over residues 268–277 (VRRRRTGKKR).

Belongs to the universal ribosomal protein uL2 family. Part of the 50S ribosomal subunit. Forms a bridge to the 30S subunit in the 70S ribosome.

Its function is as follows. One of the primary rRNA binding proteins. Required for association of the 30S and 50S subunits to form the 70S ribosome, for tRNA binding and peptide bond formation. It has been suggested to have peptidyltransferase activity; this is somewhat controversial. Makes several contacts with the 16S rRNA in the 70S ribosome. This is Large ribosomal subunit protein uL2 from Saccharopolyspora erythraea (strain ATCC 11635 / DSM 40517 / JCM 4748 / NBRC 13426 / NCIMB 8594 / NRRL 2338).